A 431-amino-acid polypeptide reads, in one-letter code: MASDCSPTGCSSESSARASDCALASTCSVETTCLPSACATSSCQTPSFPSGARLPTGCLPPACFAGSCNIPCVVGNCAWCEDGVFNSNEKETMQFLNDRLASYLEKVRGLEELNAELECRIREQCEEDVPLVCPDYQCYFDTIEDLQQKILCTKAENCRLAVQLDNCKLAADDFRSKYESELSLRQLVETDISGLRGILGELTVCRSDLEAHVESLKDDLLCLKKSHEEEVNVLRGQLGDRLSVELDTAPTTDLNRVLDEMRCQYETVLANNRRDVEEWFAAQTEELNQQQLSSAEQLQGCQTEILELKRTANTLEIELQAQQSLTESLECTVAETEAQYSSELAQIQCLIDNVENQLAEIRCDLERQNQEYRVLLDTKARLECEINTYQGLLDSEDSRLPCNPCSATSMSNDTCEPCSAYVICTVENSCP.

The head stretch occupies residues M1–E89. The IF rod domain maps to E89–L400. Residues K90–Q124 are coil 1A. The linker 1 stretch occupies residues C125–D135. Residues Y136–G236 form a coil 1B region. Positions Q237 to T252 are linker 12. The tract at residues D253–E396 is coil 2. Residues D397 to P431 are tail.

This sequence belongs to the intermediate filament family. In terms of assembly, heterotetramer of two type I and two type II keratins.

Functionally, may play a role in late hair differentiation. This is Keratin, type I cytoskeletal 40 (KRT40) from Bos taurus (Bovine).